The following is a 320-amino-acid chain: Cytochrome f (320 aa).

Positions 1–35 (MQTRKTLSWIKEEITRSISLSLMLSIITHASLSNA) are cleaved as a signal peptide. 4 residues coordinate heme: tyrosine 36, cysteine 56, cysteine 59, and histidine 60. The helical transmembrane segment at 286 to 306 (VQGLLFFLTSVLLAQIFLVLK) threads the bilayer.

Belongs to the cytochrome f family. The 4 large subunits of the cytochrome b6-f complex are cytochrome b6, subunit IV (17 kDa polypeptide, petD), cytochrome f and the Rieske protein, while the 4 small subunits are PetG, PetL, PetM and PetN. The complex functions as a dimer. The cofactor is heme.

Its subcellular location is the plastid. It localises to the chloroplast thylakoid membrane. Functionally, component of the cytochrome b6-f complex, which mediates electron transfer between photosystem II (PSII) and photosystem I (PSI), cyclic electron flow around PSI, and state transitions. The protein is Cytochrome f of Pelargonium hortorum (Common geranium).